The sequence spans 964 residues: Translation initiation factor IF-2 (964 aa).

Residues 35–353 form a disordered region; sequence ASSTIEPPVV…RQKRNEYESM (319 aa). Low complexity predominate over residues 64–108; that stretch reads KPTPAKPAAKPGAPAPKPGTAQKPTAPTPGAVAAPKPGTAAAKPT. A compositionally biased stretch (pro residues) spans 124-133; sequence PAKPTAPKPA. Positions 145 to 155 are enriched in basic and acidic residues; sequence AAKKAAEDKAT. The segment covering 166–178 has biased composition (pro residues); sequence NAMPRPMAKPGPK. The span at 220–233 shows a compositional bias: low complexity; that stretch reads PRPQGGQRSGAPRD. Composition is skewed to gly residues over residues 234–252 and 290–333; these read GQGG…GPRP and GKGG…GRPG. Residues 337 to 346 show a composition bias toward basic residues; the sequence is RRGRKSKRQK. The tr-type G domain maps to 459-631; the sequence is KRPPVVTVMG…VCLTADAELD (173 aa). The segment at 468-475 is G1; that stretch reads GHVDHGKT. A GTP-binding site is contributed by 468-475; the sequence is GHVDHGKT. Positions 493 to 497 are G2; the sequence is GITQG. Residues 518-521 form a G3 region; the sequence is DTPG. GTP-binding positions include 518–522 and 572–575; these read DTPGH and NKID. A G4 region spans residues 572-575; that stretch reads NKID. Residues 608-610 form a G5 region; that stretch reads SAK.

It belongs to the TRAFAC class translation factor GTPase superfamily. Classic translation factor GTPase family. IF-2 subfamily.

The protein resides in the cytoplasm. Functionally, one of the essential components for the initiation of protein synthesis. Protects formylmethionyl-tRNA from spontaneous hydrolysis and promotes its binding to the 30S ribosomal subunits. Also involved in the hydrolysis of GTP during the formation of the 70S ribosomal complex. The protein is Translation initiation factor IF-2 of Corynebacterium efficiens (strain DSM 44549 / YS-314 / AJ 12310 / JCM 11189 / NBRC 100395).